The primary structure comprises 147 residues: Large ribosomal subunit protein uL13 (147 aa).

The protein belongs to the universal ribosomal protein uL13 family. In terms of assembly, part of the 50S ribosomal subunit.

This protein is one of the early assembly proteins of the 50S ribosomal subunit, although it is not seen to bind rRNA by itself. It is important during the early stages of 50S assembly. The chain is Large ribosomal subunit protein uL13 from Paenarthrobacter aurescens (strain TC1).